The chain runs to 137 residues: Small ribosomal subunit protein eS19 (137 aa).

The protein belongs to the eukaryotic ribosomal protein eS19 family. Component of the small ribosomal subunit.

Its subcellular location is the cytoplasm. In Encephalitozoon cuniculi (strain GB-M1) (Microsporidian parasite), this protein is Small ribosomal subunit protein eS19 (RPS19).